The sequence spans 640 residues: MGKIIGIDLGTTNSCVAVMEGGKPRVIENAEGARTTPSVIAYQEDGEILVGAPAKRQAVTNPKNTLFAVKRLIGRRFDEKEVQKDIGLMPYTITKADNGDAWVEVRGQKLAPPQISAEVLRKMKKTAEDYLGEEVTEAVITVPAYFNDSQRQATKDAGRIAGLEVKRIINEPTAAALAFGLDKQEGDRKIAVYDLGGGTFDISIIEISEIDGEHQFEVLSTNGDTFLGGEDFDNRLIDFLADEFKKENGIDLRNDLLAKQRLKEAAEKAKIELSSSTQTEVNLPYITADASGPKHLVVKITRAKFESLVEDLIERSIKPCEVALKDAGVKVSDIQDVILVGGQTRMPKVQEKVKEFFGKEPRKDVNPDEAVAVGAAIQGGVLQGDVKDVLLLDVTPLSLGIETLGGVMTKLIQKNTTIPTKASQVFSTAEDNQSAVTIHVLQGEREMASGNKSLGQFNLTDIPPAPRGMPQIEVTFDIDANGILHVSAKDKATGKENKITIKANSGLSDEEIKRMEEEAAKYADEDKKLRELVDARNSADSAIHSVKKSLAEHGDKLDAAEKGAIEKAVQELEDVIKGDDKAAIESKTNALIEASQKLGEKVYAAGETESSAAEPGEPQEKTVDAEVVDAEFEEVKDDKK.

Thr199 carries the phosphothreonine; by autocatalysis modification. A disordered region spans residues 603-640; the sequence is YAAGETESSAAEPGEPQEKTVDAEVVDAEFEEVKDDKK. Acidic residues predominate over residues 626 to 640; the sequence is EVVDAEFEEVKDDKK.

It belongs to the heat shock protein 70 family.

Acts as a chaperone. The sequence is that of Chaperone protein DnaK from Methylobacillus flagellatus (strain ATCC 51484 / DSM 6875 / VKM B-1610 / KT).